A 429-amino-acid chain; its full sequence is Ribosomal RNA small subunit methyltransferase B (429 aa).

S-adenosyl-L-methionine-binding positions include 254 to 260 (CAAPGGK), Asp277, Asp303, and Asp322. The active-site Nucleophile is Cys375.

The protein belongs to the class I-like SAM-binding methyltransferase superfamily. RsmB/NOP family.

It localises to the cytoplasm. It catalyses the reaction cytidine(967) in 16S rRNA + S-adenosyl-L-methionine = 5-methylcytidine(967) in 16S rRNA + S-adenosyl-L-homocysteine + H(+). Specifically methylates the cytosine at position 967 (m5C967) of 16S rRNA. The polypeptide is Ribosomal RNA small subunit methyltransferase B (Escherichia coli (strain SMS-3-5 / SECEC)).